The following is a 953-amino-acid chain: Protein translocase subunit SecA 1 (953 aa).

Residues Gln83, 101-105 (GEGKT), and Asp490 each bind ATP. Residues 854 to 867 (AAAAAAKASDSAAK) are compositionally biased toward low complexity. Positions 854 to 953 (AAAAAAKASD…DRPAKSHRKG (100 aa)) are disordered. Residues 929-947 (SRRERREAARKQAKADRPA) are compositionally biased toward basic and acidic residues.

This sequence belongs to the SecA family. As to quaternary structure, monomer and homodimer. Part of the essential Sec protein translocation apparatus which comprises SecA, SecYEG and auxiliary proteins SecDF. Other proteins may also be involved.

The protein localises to the cell membrane. Its subcellular location is the cytoplasm. The enzyme catalyses ATP + H2O + cellular proteinSide 1 = ADP + phosphate + cellular proteinSide 2.. Part of the Sec protein translocase complex. Interacts with the SecYEG preprotein conducting channel. Has a central role in coupling the hydrolysis of ATP to the transfer of proteins into and across the cell membrane, serving as an ATP-driven molecular motor driving the stepwise translocation of polypeptide chains across the membrane. In Mycolicibacterium smegmatis (strain ATCC 700084 / mc(2)155) (Mycobacterium smegmatis), this protein is Protein translocase subunit SecA 1.